Here is a 203-residue protein sequence, read N- to C-terminus: Ponticulin-like protein H (203 aa).

Residues 1 to 20 (MKLLNSLVLLAALCAITANG) form the signal peptide. A glycan (N-linked (GlcNAc...) asparagine) is linked at Asn58. Residues 127–168 (SDSTNPTSTPSTTPSATPTVTPSTTPTVTPTVTPSTTPTVAP) are compositionally biased toward low complexity. The segment at 127–183 (SDSTNPTSTPSTTPSATPTVTPSTTPTVTPTVTPSTTPTVAPTVPPTTPPSTTTGSG) is disordered. Ser182 carries GPI-like-anchor amidated serine lipidation. A propeptide spans 183 to 203 (GSTVVASFGLIVSILLASLAL) (removed in mature form).

This sequence belongs to the ponticulin family. Post-translationally, the GPI-like-anchor contains a phosphoceramide group, rather than a phosphatidyl group.

The protein localises to the cell membrane. Binds F-actin and nucleates actin assembly. This Dictyostelium discoideum (Social amoeba) protein is Ponticulin-like protein H (ponH).